A 201-amino-acid polypeptide reads, in one-letter code: Peptidyl-prolyl cis-trans isomerase CYP19-4 (201 aa).

The signal sequence occupies residues 1 to 23 (MAKASFILLGTLFLFGAIASIQA). The region spanning 35-198 (YFDVEIDGKS…SKVVIADSGE (164 aa)) is the PPIase cyclophilin-type domain.

This sequence belongs to the cyclophilin-type PPIase family. Interacts with EMB30/GNOM. Ubiquitous, mostly in aerial organs (at protein level).

Its subcellular location is the cytoplasm. It localises to the membrane. It is found in the endoplasmic reticulum. The protein localises to the secreted. The enzyme catalyses [protein]-peptidylproline (omega=180) = [protein]-peptidylproline (omega=0). With respect to regulation, binds cyclosporin A (CsA). CsA mediates some of its effects via an inhibitory action on PPIase. PPIases accelerate the folding of proteins. It catalyzes the cis-trans isomerization of proline imidic peptide bonds in oligopeptides. May be involved during embryogenesis and organ development by regulating the folding of EMB30/GNOM, and thus, by modulating its activity. The polypeptide is Peptidyl-prolyl cis-trans isomerase CYP19-4 (CYP19-4) (Arabidopsis thaliana (Mouse-ear cress)).